Here is a 659-residue protein sequence, read N- to C-terminus: Tail sheath protein (659 aa).

It belongs to the myoviridae tail sheath protein family. In terms of assembly, hexamer.

It localises to the virion. Its function is as follows. Structural component of the bacteriophage tail which consists of a contractile sheath, a tube and a baseplate. The central cylindrical segment of the tail consists of a rigid tube, composed of multiple copies of gp19, surrounded by the outer contractile sheath assembled from gp18 subunits. A total of 138 copies of gp18 arranged into 23 hexameric rings constitutes the sheath. During infection, contraction of the sheath drives the central tube through the host outer membrane, creating a channel for DNA ejection from the capsid into the host cell. The polypeptide is Tail sheath protein (18) (Escherichia coli (Bacteriophage T4)).